The sequence spans 315 residues: Salivary protein SG34 (315 aa).

The N-terminal stretch at methionine 1–serine 20 is a signal peptide. Positions asparagine 98–glutamine 161 form a coiled coil.

Its function is as follows. (Microbial infection) Modulates replication of duck Tembusu virus in salivary glands and virus release into the saliva, probably via the regulation of antimicrobial peptides expression in response to duck Tembusu virus infection. The chain is Salivary protein SG34 from Aedes albopictus (Asian tiger mosquito).